A 107-amino-acid polypeptide reads, in one-letter code: UPF0145 protein TT_C0892 (107 aa).

The protein belongs to the UPF0145 family.

The sequence is that of UPF0145 protein TT_C0892 from Thermus thermophilus (strain ATCC BAA-163 / DSM 7039 / HB27).